A 358-amino-acid polypeptide reads, in one-letter code: Magnesium-protoporphyrin IX monomethyl ester [oxidative] cyclase (358 aa).

It belongs to the AcsF family. The cofactor is Fe cation.

The enzyme catalyses Mg-protoporphyrin IX 13-monomethyl ester + 3 NADPH + 3 O2 + 2 H(+) = 3,8-divinyl protochlorophyllide a + 3 NADP(+) + 5 H2O. It participates in porphyrin-containing compound metabolism; chlorophyll biosynthesis (light-independent). Catalyzes the formation of the isocyclic ring in chlorophyll biosynthesis. Mediates the cyclase reaction, which results in the formation of divinylprotochlorophyllide (Pchlide) characteristic of all chlorophylls from magnesium-protoporphyrin IX 13-monomethyl ester (MgPMME). This chain is Magnesium-protoporphyrin IX monomethyl ester [oxidative] cyclase, found in Synechococcus elongatus (strain ATCC 33912 / PCC 7942 / FACHB-805) (Anacystis nidulans R2).